A 448-amino-acid chain; its full sequence is Probable glycine dehydrogenase (decarboxylating) subunit 1 (448 aa).

This sequence belongs to the GcvP family. N-terminal subunit subfamily. The glycine cleavage system is composed of four proteins: P, T, L and H. In this organism, the P 'protein' is a heterodimer of two subunits.

The catalysed reaction is N(6)-[(R)-lipoyl]-L-lysyl-[glycine-cleavage complex H protein] + glycine + H(+) = N(6)-[(R)-S(8)-aminomethyldihydrolipoyl]-L-lysyl-[glycine-cleavage complex H protein] + CO2. The glycine cleavage system catalyzes the degradation of glycine. The P protein binds the alpha-amino group of glycine through its pyridoxal phosphate cofactor; CO(2) is released and the remaining methylamine moiety is then transferred to the lipoamide cofactor of the H protein. The polypeptide is Probable glycine dehydrogenase (decarboxylating) subunit 1 (gcvPA) (Bacillus subtilis (strain 168)).